An 831-amino-acid chain; its full sequence is Probable basic-leucine zipper transcription factor P (831 aa).

2 disordered regions span residues 1–33 (MNHR…PSII) and 54–166 (NITS…IASR). The span at 54-85 (NITSSPSTSSSPPISTTTTTTTTTTTTATAKK) shows a compositional bias: low complexity. The span at 87–96 (NSKEKKKTTN) shows a compositional bias: basic and acidic residues. Residues 97–129 (KDNNNNNNNNNSNNQQQQQQQQQQQQQQQQQQQ) are compositionally biased toward low complexity. A coiled-coil region spans residues 101–141 (NNNNNNNSNNQQQQQQQQQQQQQQQQQQQYEEEDDDEEDEG). Residues 130–143 (YEEEDDDEEDEGGD) are compositionally biased toward acidic residues. The span at 144–154 (DNTKVGKGEKM) shows a compositional bias: basic and acidic residues. Residues 151–214 (GEKMKARRTN…LELLKFSQEV (64 aa)) form the bZIP domain. A basic motif region spans residues 153–173 (KMKARRTNQNIASRNYRQRKK). The segment at 176–183 (IKEMEDKI) is leucine-zipper. Low complexity-rich tracts occupy residues 469–484 (SSSS…SSTS) and 497–510 (SSSN…SASS). Disordered stretches follow at residues 469–510 (SSSS…SASS), 658–697 (QQQA…HQNY), 715–771 (DATN…NTNK), and 787–810 (SLFS…QNDS). Residues 601-664 (AQQHAQQQAQ…QAAQQQAAQQ (64 aa)) are a coiled coil. Composition is skewed to low complexity over residues 674–695 (PPQH…QQHQ), 720–750 (NNNN…NNNN), and 787–800 (SLFS…NSQS).

It belongs to the bZIP family.

The protein localises to the nucleus. In terms of biological role, probable transcriptional regulator. This chain is Probable basic-leucine zipper transcription factor P (bzpP), found in Dictyostelium discoideum (Social amoeba).